A 107-amino-acid polypeptide reads, in one-letter code: Phosphoribosyl-ATP pyrophosphatase (107 aa).

This sequence belongs to the PRA-PH family.

The protein resides in the cytoplasm. It carries out the reaction 1-(5-phospho-beta-D-ribosyl)-ATP + H2O = 1-(5-phospho-beta-D-ribosyl)-5'-AMP + diphosphate + H(+). Its pathway is amino-acid biosynthesis; L-histidine biosynthesis; L-histidine from 5-phospho-alpha-D-ribose 1-diphosphate: step 2/9. The polypeptide is Phosphoribosyl-ATP pyrophosphatase (Bacillus thuringiensis (strain Al Hakam)).